A 101-amino-acid polypeptide reads, in one-letter code: Small ribosomal subunit protein bS18c (101 aa).

A compositionally biased stretch (basic residues) spans 1–19 (MDKSKRPFRKSKRSFRRRL). The interval 1–23 (MDKSKRPFRKSKRSFRRRLPPIG) is disordered.

Belongs to the bacterial ribosomal protein bS18 family. As to quaternary structure, part of the 30S ribosomal subunit.

It is found in the plastid. It localises to the chloroplast. In Ceratophyllum demersum (Rigid hornwort), this protein is Small ribosomal subunit protein bS18c.